Consider the following 312-residue polypeptide: DNA-directed RNA polymerase subunit alpha (312 aa).

An alpha N-terminal domain (alpha-NTD) region spans residues 1-229 (MLQYQIDRIE…ELFQPLATVT (229 aa)). Positions 246 to 312 (IPLEELNLSV…ISIPQSRTSA (67 aa)) are alpha C-terminal domain (alpha-CTD).

This sequence belongs to the RNA polymerase alpha chain family. As to quaternary structure, in cyanobacteria the RNAP catalytic core is composed of 2 alpha, 1 beta, 1 beta', 1 gamma and 1 omega subunit. When a sigma factor is associated with the core the holoenzyme is formed, which can initiate transcription.

The enzyme catalyses RNA(n) + a ribonucleoside 5'-triphosphate = RNA(n+1) + diphosphate. Its function is as follows. DNA-dependent RNA polymerase catalyzes the transcription of DNA into RNA using the four ribonucleoside triphosphates as substrates. The protein is DNA-directed RNA polymerase subunit alpha of Parasynechococcus marenigrum (strain WH8102).